We begin with the raw amino-acid sequence, 387 residues long: WD repeat-containing protein 89 (387 aa).

6 WD repeats span residues 21-65 (KEPT…VLRE), 68-107 (GYPG…EKPV), 112-156 (GYPS…QDLS), 168-208 (THSD…EEDA), 214-254 (NSIS…TDEP), and 319-358 (GHAA…KTFT).

The chain is WD repeat-containing protein 89 (WDR89) from Pongo abelii (Sumatran orangutan).